The following is a 238-amino-acid chain: Probable RNA/DNA demethylase ALKBH6 (238 aa).

Residues 96-227 (PANHVLVNQY…RVSLTIRRVP (132 aa)) enclose the Fe2OG dioxygenase domain. Positions 103 and 105 each coordinate 2-oxoglutarate. The Fe cation site is built by His114, Asp116, and His182. 2-oxoglutarate is bound by residues Arg218 and Ser220.

It belongs to the alkB family. Interacts with VCPKMT. It depends on Fe(2+) as a cofactor.

The protein localises to the cytoplasm. It localises to the nucleus. Its function is as follows. Probable Fe(2+)/2-oxoglutarate-dependent dioxygenase involved in oxidative demethylation of nucleic acids. Binds nucleic acids with a preference for ssDNA or ssRNA to other types of DNAs. May play a role in nucleic acid damage repair. The chain is Probable RNA/DNA demethylase ALKBH6 (Alkbh6) from Mus musculus (Mouse).